The following is a 464-amino-acid chain: tRNA modification GTPase MnmE (464 aa).

(6S)-5-formyl-5,6,7,8-tetrahydrofolate is bound by residues Arg-25, Glu-87, and Lys-130. The TrmE-type G domain maps to 226–386; sequence GLSVVLAGQP…LREELLRIAG (161 aa). Asn-236 is a K(+) binding site. GTP is bound by residues 236–241, 255–261, and 280–283; these read NVGKSS, TPIAGTT, and DTAG. Ser-240 serves as a coordination point for Mg(2+). The K(+) site is built by Thr-255, Ile-257, and Thr-260. Thr-261 contacts Mg(2+). Lys-464 provides a ligand contact to (6S)-5-formyl-5,6,7,8-tetrahydrofolate.

The protein belongs to the TRAFAC class TrmE-Era-EngA-EngB-Septin-like GTPase superfamily. TrmE GTPase family. Homodimer. Heterotetramer of two MnmE and two MnmG subunits. Requires K(+) as cofactor.

The protein localises to the cytoplasm. Functionally, exhibits a very high intrinsic GTPase hydrolysis rate. Involved in the addition of a carboxymethylaminomethyl (cmnm) group at the wobble position (U34) of certain tRNAs, forming tRNA-cmnm(5)s(2)U34. In Paraburkholderia xenovorans (strain LB400), this protein is tRNA modification GTPase MnmE.